A 639-amino-acid chain; its full sequence is MHMLLFIGALALPVFVCTQSCEPASLSPRLAGVDLEKFRLTPNAEYVDSDQQIPISTTNVGLIEQSYVETAIKLVRETFPNATFRLREDHYVGDNGVAHVHFRQTVHNLDVDNGDFNVNVGRDGSVFSYGNSFYTGPVPSITQLTKRDFTDPVAALKFALTHLQLPITAEDVSVESTKHPHKYVLRGTSGAVTNPKARLVYFVKPDGTLCLVWRVETDVDDNWLLTYVDAKTAEEIHGVVDYVSEATFQVYGWGINDPGQVDSRAVLTDPWDLKESPLTWFRDGQKNWTTTRGNNGIAQENINNLPTYLNNFRPDSPTQNFSYEYPAGGSPKDYINASITQLFYTANAYHDLLYTLGFNEKAGNFQWNNSGLGGKEKDYVILNAQDGASRNNADFATPPDGSPARMRMYLFTHTTPPRDGVFESGIVIHEYTHGLSMRLTGGPDNSRCLSAFESASMGEGWGDFMATAIRLKPSDTRATDYGMGMWVYNNEKGIRQYLYSTSMETNPLNYTSLNRMWEAHAGGTVWASMLYEVLWNLIDRHGKNDGPRPTFDERGVPKDGKYLAMKIVIDAMALQPCNPDFVQARNAILDADQALTGGQNKCEIWTGFAKRGLGQGAEYGRGRRVGSYDIPGDVCQKKI.

Positions Met1 to Val16 are cleaved as a signal peptide. Residues Cys17 to Glu245 constitute a propeptide that is removed on maturation. N-linked (GlcNAc...) asparagine glycans are attached at residues Asn287, Asn320, Asn336, and Asn368. Residue His429 coordinates Zn(2+). The active site involves Glu430. His433 is a Zn(2+) binding site. N-linked (GlcNAc...) asparagine glycosylation occurs at Asn509.

It belongs to the peptidase M36 family. Zn(2+) serves as cofactor.

It is found in the secreted. Its function is as follows. Secreted metalloproteinase that allows assimilation of proteinaceous substrates. The polypeptide is Extracellular metalloproteinase NpIII (NpIII) (Aspergillus oryzae (strain ATCC 42149 / RIB 40) (Yellow koji mold)).